We begin with the raw amino-acid sequence, 89 residues long: Small ribosomal subunit protein uS15 (89 aa).

It belongs to the universal ribosomal protein uS15 family. As to quaternary structure, part of the 30S ribosomal subunit. Forms a bridge to the 50S subunit in the 70S ribosome, contacting the 23S rRNA.

One of the primary rRNA binding proteins, it binds directly to 16S rRNA where it helps nucleate assembly of the platform of the 30S subunit by binding and bridging several RNA helices of the 16S rRNA. Its function is as follows. Forms an intersubunit bridge (bridge B4) with the 23S rRNA of the 50S subunit in the ribosome. This is Small ribosomal subunit protein uS15 from Rhizobium leguminosarum bv. trifolii (strain WSM2304).